We begin with the raw amino-acid sequence, 325 residues long: DNA-directed RNA polymerase subunit alpha (325 aa).

The interval 1–238 is alpha N-terminal domain (alpha-NTD); it reads MSPKNLLKGF…DHLTVFINFE (238 aa). The interval 255 to 325 is alpha C-terminal domain (alpha-CTD); it reads LKAALSKHVE…MGLSFGMRDF (71 aa).

Belongs to the RNA polymerase alpha chain family. Homodimer. The RNAP catalytic core consists of 2 alpha, 1 beta, 1 beta' and 1 omega subunit. When a sigma factor is associated with the core the holoenzyme is formed, which can initiate transcription.

The catalysed reaction is RNA(n) + a ribonucleoside 5'-triphosphate = RNA(n+1) + diphosphate. DNA-dependent RNA polymerase catalyzes the transcription of DNA into RNA using the four ribonucleoside triphosphates as substrates. This Leptospira biflexa serovar Patoc (strain Patoc 1 / Ames) protein is DNA-directed RNA polymerase subunit alpha.